The primary structure comprises 155 residues: SsrA-binding protein (155 aa).

This sequence belongs to the SmpB family.

It localises to the cytoplasm. Required for rescue of stalled ribosomes mediated by trans-translation. Binds to transfer-messenger RNA (tmRNA), required for stable association of tmRNA with ribosomes. tmRNA and SmpB together mimic tRNA shape, replacing the anticodon stem-loop with SmpB. tmRNA is encoded by the ssrA gene; the 2 termini fold to resemble tRNA(Ala) and it encodes a 'tag peptide', a short internal open reading frame. During trans-translation Ala-aminoacylated tmRNA acts like a tRNA, entering the A-site of stalled ribosomes, displacing the stalled mRNA. The ribosome then switches to translate the ORF on the tmRNA; the nascent peptide is terminated with the 'tag peptide' encoded by the tmRNA and targeted for degradation. The ribosome is freed to recommence translation, which seems to be the essential function of trans-translation. In Bacillus cereus (strain 03BB102), this protein is SsrA-binding protein.